We begin with the raw amino-acid sequence, 145 residues long: Large ribosomal subunit protein uL13 (145 aa).

This sequence belongs to the universal ribosomal protein uL13 family. In terms of assembly, part of the 50S ribosomal subunit.

Functionally, this protein is one of the early assembly proteins of the 50S ribosomal subunit, although it is not seen to bind rRNA by itself. It is important during the early stages of 50S assembly. This chain is Large ribosomal subunit protein uL13, found in Bacillus cereus (strain ZK / E33L).